We begin with the raw amino-acid sequence, 242 residues long: ATP synthase subunit a (242 aa).

Helical transmembrane passes span 29-49 (SSIY…LAFY), 84-104 (FIPL…LGMT), 114-134 (IIVT…VGFV), 140-160 (FLTL…MIVI), 189-209 (VIAG…IPLM), and 210-230 (VILI…FTIL).

This sequence belongs to the ATPase A chain family. F-type ATPases have 2 components, CF(1) - the catalytic core - and CF(0) - the membrane proton channel. CF(1) has five subunits: alpha(3), beta(3), gamma(1), delta(1), epsilon(1). CF(0) has three main subunits: a(1), b(2) and c(9-12). The alpha and beta chains form an alternating ring which encloses part of the gamma chain. CF(1) is attached to CF(0) by a central stalk formed by the gamma and epsilon chains, while a peripheral stalk is formed by the delta and b chains.

Its subcellular location is the cell inner membrane. Its function is as follows. Key component of the proton channel; it plays a direct role in the translocation of protons across the membrane. In Rickettsia felis (strain ATCC VR-1525 / URRWXCal2) (Rickettsia azadi), this protein is ATP synthase subunit a.